The chain runs to 319 residues: Structure-specific endonuclease subunit SLX1 (319 aa).

The 84-residue stretch at 20–103 (TFYCCYLLQS…QHGYKTHYIP (84 aa)) folds into the GIY-YIG domain. The segment at 233 to 297 (CNLCGQCYDY…LPNFCMCPGC (65 aa)) adopts an SLX1-type zinc-finger fold.

The protein belongs to the SLX1 family. As to quaternary structure, forms a heterodimer with SLX4. The cofactor is a divalent metal cation.

Its subcellular location is the nucleus. Functionally, catalytic subunit of the SLX1-SLX4 structure-specific endonuclease that resolves DNA secondary structures generated during DNA repair and recombination. Has endonuclease activity towards branched DNA substrates, introducing single-strand cuts in duplex DNA close to junctions with ss-DNA. The sequence is that of Structure-specific endonuclease subunit SLX1 from Vanderwaltozyma polyspora (strain ATCC 22028 / DSM 70294 / BCRC 21397 / CBS 2163 / NBRC 10782 / NRRL Y-8283 / UCD 57-17) (Kluyveromyces polysporus).